The following is a 68-amino-acid chain: DNA-directed RNA polymerase subunit omega (68 aa).

The protein belongs to the RNA polymerase subunit omega family. The RNAP catalytic core consists of 2 alpha, 1 beta, 1 beta' and 1 omega subunit. When a sigma factor is associated with the core the holoenzyme is formed, which can initiate transcription.

The catalysed reaction is RNA(n) + a ribonucleoside 5'-triphosphate = RNA(n+1) + diphosphate. Functionally, promotes RNA polymerase assembly. Latches the N- and C-terminal regions of the beta' subunit thereby facilitating its interaction with the beta and alpha subunits. The chain is DNA-directed RNA polymerase subunit omega from Citrifermentans bemidjiense (strain ATCC BAA-1014 / DSM 16622 / JCM 12645 / Bem) (Geobacter bemidjiensis).